The sequence spans 110 residues: MSMTDVLSAEDIKKAIGAFAAADSFDHKKFFQMVGLKKKNPDEVKKVFHILDKDKSGFIEEDELGSILKGFSSDARDLSAKETKTLLAAGDKDGDGKIGVEEFSTLVAES.

Residue Ser2 is modified to N-acetylserine. 3 positions are modified to phosphoserine: Ser2, Ser8, and Ser24. EF-hand domains follow at residues 39–74 (KNPD…FSSD) and 78–110 (LSAK…VAES). The Ca(2+) site is built by Asp52, Asp54, Ser56, Phe58, Glu60, Glu63, Asp91, Asp93, Asp95, Lys97, and Glu102.

Expressed in the modiolar nerve root (at protein level).

In terms of biological role, in muscle, parvalbumin is thought to be involved in relaxation after contraction. It binds two calcium ions. The chain is Parvalbumin alpha (Pvalb) from Mus musculus (Mouse).